The sequence spans 57 residues: uncharacterized protein (57 aa).

The tract at residues 34 to 57 (QGKRGETEGQIEISRKAGHPAPAF) is disordered.

This is an uncharacterized protein from Saccharomyces cerevisiae (strain ATCC 204508 / S288c) (Baker's yeast).